A 488-amino-acid chain; its full sequence is MEIRSLIVSMNPNLSSFELSRPVSPLTRSLVPFRSTKLVPRSISRVSASISTPNSETDKISVKPVYVPTSPNRELRTPHSGYHFDGTPRKFFEGWYFRVSIPEKRESFCFMYSVENPAFRQSLSPLEVALYGPRFTGVGAQILGANDKYLCQYEQDSHNFWGDRHELVLGNTFSAVPGAKAPNKEVPPEEFNRRVSEGFQATPFWHQGHICDDGRTDYAETVKSARWEYSTRPVYGWGDVGAKQKSTAGWPAAFPVFEPHWQICMAGGLSTGWIEWGGERFEFRDAPSYSEKNWGGGFPRKWFWVQCNVFEGATGEVALTAGGGLRQLPGLTETYENAALVCVHYDGKMYEFVPWNGVVRWEMSPWGYWYITAENENHVVELEARTNEAGTPLRAPTTEVGLATACRDSCYGELKLQIWERLYDGSKGKVILETKSSMAAVEIGGGPWFGTWKGDTSNTPELLKQALQVPLDLESALGLVPFFKPPGL.

The N-terminal 76 residues, 1–76, are a transit peptide targeting the chloroplast; it reads MEIRSLIVSM…VPTSPNRELR (76 aa).

Its subcellular location is the plastid. It is found in the chloroplast. The protein resides in the plastoglobule. The enzyme catalyses delta-tocopherol = 2-methyl-6-phytyl-1,4-benzene-1,4-diol. It carries out the reaction gamma-tocopherol = 2,3-dimethyl-6-phytylbenzene-1,4-diol. The catalysed reaction is delta-tocotrienol = 6-geranylgeranyl-2-methylbenzene-1,4-diol. It catalyses the reaction gamma-tocotrienol = 6-geranylgeranyl-2,3-dimethylbenzene-1,4-diol. It participates in cofactor biosynthesis; tocopherol biosynthesis. In terms of biological role, involved in the synthesis of both tocopherols and tocotrienols (vitamin E), which presumably protect photosynthetic complexes from oxidative stress. Catalyzes the conversion of 2-methyl-6-phytyl-1,4-hydroquinone and 2,3-dimethyl-5-phytyl-1,4-hydroquinone (DMPQ) to delta- and gamma-tocopherol respectively. Also converts 2,3-dimethyl-5-geranylgeranyl-1,4-hydroquinone (DMGQ) to gamma-tocotrienol. In Arabidopsis thaliana (Mouse-ear cress), this protein is Tocopherol cyclase, chloroplastic (VTE1).